Consider the following 85-residue polypeptide: U4-theraphotoxin-Hhn1a (85 aa).

The N-terminal stretch at 1-22 is a signal peptide; that stretch reads MKMTLIAILTCAAVLVLHITAA. Positions 23–48 are excised as a propeptide; sequence EELEAESQLMEVGMPDTELEAVDEER. Intrachain disulfides connect Cys52/Cys66, Cys56/Cys77, and Cys71/Cys82.

The protein belongs to the neurotoxin 12 (Hwtx-2) family. 02 (Hwtx-2) subfamily. As to quaternary structure, monomer. Expressed by the venom gland.

Its subcellular location is the secreted. Neurotoxin active on both insects and mammals. This Cyriopagopus hainanus (Chinese bird spider) protein is U4-theraphotoxin-Hhn1a.